A 160-amino-acid polypeptide reads, in one-letter code: D-aminoacyl-tRNA deacylase (160 aa).

Residues 137–138 carry the Gly-cisPro motif, important for rejection of L-amino acids motif; sequence GP.

The protein belongs to the DTD family. In terms of assembly, homodimer.

It is found in the cytoplasm. The catalysed reaction is glycyl-tRNA(Ala) + H2O = tRNA(Ala) + glycine + H(+). The enzyme catalyses a D-aminoacyl-tRNA + H2O = a tRNA + a D-alpha-amino acid + H(+). An aminoacyl-tRNA editing enzyme that deacylates mischarged D-aminoacyl-tRNAs. Also deacylates mischarged glycyl-tRNA(Ala), protecting cells against glycine mischarging by AlaRS. Acts via tRNA-based rather than protein-based catalysis; rejects L-amino acids rather than detecting D-amino acids in the active site. By recycling D-aminoacyl-tRNA to D-amino acids and free tRNA molecules, this enzyme counteracts the toxicity associated with the formation of D-aminoacyl-tRNA entities in vivo and helps enforce protein L-homochirality. The polypeptide is D-aminoacyl-tRNA deacylase (Chloroflexus aurantiacus (strain ATCC 29364 / DSM 637 / Y-400-fl)).